A 180-amino-acid chain; its full sequence is D-glycero-beta-D-manno-heptose-1,7-bisphosphate 7-phosphatase (180 aa).

Residue D14 is the Nucleophile of the active site. The Mg(2+) site is built by D14 and D16. Substrate-binding positions include 14–16 (DRD), 22–25 (NDHY), and 56–59 (TNQS). The active-site Proton donor is the D16. Residues C95, H97, C110, and H112 each contribute to the Zn(2+) site. 113–114 (RK) is a substrate binding site. D139 contacts Mg(2+).

The protein belongs to the gmhB family. In terms of assembly, monomer. It depends on Mg(2+) as a cofactor.

The protein localises to the cytoplasm. The enzyme catalyses D-glycero-beta-D-manno-heptose 1,7-bisphosphate + H2O = D-glycero-beta-D-manno-heptose 1-phosphate + phosphate. It functions in the pathway nucleotide-sugar biosynthesis; ADP-L-glycero-beta-D-manno-heptose biosynthesis; ADP-L-glycero-beta-D-manno-heptose from D-glycero-beta-D-manno-heptose 7-phosphate: step 2/4. Its pathway is bacterial outer membrane biogenesis; LPS core biosynthesis. Converts the D-glycero-beta-D-manno-heptose 1,7-bisphosphate (beta-HBP) intermediate into D-glycero-beta-D-manno-heptose 1-phosphate by removing the phosphate group at the C-7 position. Also catalyzes the dephosphorylation of D-glycero-alpha-D-manno-heptose 1,7-bisphosphate in vitro. The protein is D-glycero-beta-D-manno-heptose-1,7-bisphosphate 7-phosphatase of Rhodopseudomonas palustris (strain ATCC BAA-98 / CGA009).